Consider the following 178-residue polypeptide: uncharacterized protein (178 aa).

This sequence belongs to the mimivirus L114/R131 family.

This is an uncharacterized protein from Acanthamoeba polyphaga mimivirus (APMV).